A 418-amino-acid polypeptide reads, in one-letter code: Mitochondrial distribution and morphology protein 10 (418 aa).

Belongs to the MDM10 family. As to quaternary structure, component of the ER-mitochondria encounter structure (ERMES) or MDM complex, composed of MMM1, MDM10, MDM12 and MDM34. Associates with the mitochondrial outer membrane sorting assembly machinery SAM(core) complex.

The protein localises to the mitochondrion outer membrane. Component of the ERMES/MDM complex, which serves as a molecular tether to connect the endoplasmic reticulum and mitochondria. Components of this complex are involved in the control of mitochondrial shape and protein biogenesis and may function in phospholipid exchange. MDM10 is involved in the late assembly steps of the general translocase of the mitochondrial outer membrane (TOM complex). Functions in the TOM40-specific route of the assembly of outer membrane beta-barrel proteins, including the association of TOM40 with the receptor TOM22 and small TOM proteins. Can associate with the SAM(core) complex as well as the MDM12-MMM1 complex, both involved in late steps of the major beta-barrel assembly pathway, that is responsible for biogenesis of all outer membrane beta-barrel proteins. May act as a switch that shuttles between both complexes and channels precursor proteins into the TOM40-specific pathway. Plays a role in mitochondrial morphology and in the inheritance of mitochondria. This Meyerozyma guilliermondii (strain ATCC 6260 / CBS 566 / DSM 6381 / JCM 1539 / NBRC 10279 / NRRL Y-324) (Yeast) protein is Mitochondrial distribution and morphology protein 10.